The chain runs to 242 residues: Tyrosine recombinase XerD-like (242 aa).

Residues 1-71 (MKEAIDQFIQ…AVNQFLYFLY (71 aa)) form the Core-binding (CB) domain. Positions 90 to 242 (ENSSQGSLLD…KSITTLEKYR (153 aa)) constitute a Tyr recombinase domain. Active-site residues include K148 and R209. Y241 functions as the O-(3'-phospho-DNA)-tyrosine intermediate in the catalytic mechanism.

The protein belongs to the 'phage' integrase family. XerD-like subfamily.

It localises to the cytoplasm. Functionally, putative tyrosine recombinase. Not involved in the cutting and rejoining of the recombining DNA molecules on dif(SL) site. The chain is Tyrosine recombinase XerD-like from Streptococcus gordonii (strain Challis / ATCC 35105 / BCRC 15272 / CH1 / DL1 / V288).